A 554-amino-acid chain; its full sequence is 3-(3-hydroxy-phenyl)propionate/3-hydroxycinnamic acid hydroxylase (554 aa).

Residues 17-46 (QVAI…VVEK) and 285-295 (FRIDRVLLAGD) each bind FAD.

It belongs to the PheA/TfdB FAD monooxygenase family. FAD is required as a cofactor.

It catalyses the reaction 3-(3-hydroxyphenyl)propanoate + NADH + O2 + H(+) = 3-(2,3-dihydroxyphenyl)propanoate + NAD(+) + H2O. The catalysed reaction is (2E)-3-(3-hydroxyphenyl)prop-2-enoate + NADH + O2 + H(+) = (2E)-3-(2,3-dihydroxyphenyl)prop-2-enoate + NAD(+) + H2O. It participates in aromatic compound metabolism; 3-phenylpropanoate degradation. In terms of biological role, catalyzes the insertion of one atom of molecular oxygen into position 2 of the phenyl ring of 3-(3-hydroxyphenyl)propionate (3-HPP) and hydroxycinnamic acid (3HCI). This is 3-(3-hydroxy-phenyl)propionate/3-hydroxycinnamic acid hydroxylase from Escherichia coli (strain 55989 / EAEC).